A 141-amino-acid polypeptide reads, in one-letter code: Galactose-6-phosphate isomerase subunit LacA (141 aa).

This sequence belongs to the LacAB/RpiB family. As to quaternary structure, heteromultimeric protein consisting of LacA and LacB.

It carries out the reaction aldehydo-D-galactose 6-phosphate = keto-D-tagatose 6-phosphate. The protein operates within carbohydrate metabolism; D-galactose 6-phosphate degradation; D-tagatose 6-phosphate from D-galactose 6-phosphate: step 1/1. The polypeptide is Galactose-6-phosphate isomerase subunit LacA (Streptococcus pneumoniae (strain ATCC 700669 / Spain 23F-1)).